The sequence spans 272 residues: Ribosomal RNA large subunit methyltransferase E (272 aa).

Positions 50, 52, 68, 84, and 109 each coordinate S-adenosyl-L-methionine. The Proton acceptor role is filled by K149. Positions P196–E254 constitute a TRAM domain.

The protein belongs to the class I-like SAM-binding methyltransferase superfamily. RNA methyltransferase RlmE family.

It localises to the cytoplasm. It carries out the reaction uridine(2552) in 23S rRNA + S-adenosyl-L-methionine = 2'-O-methyluridine(2552) in 23S rRNA + S-adenosyl-L-homocysteine + H(+). Specifically methylates the uridine in position 2552 of 23S rRNA at the 2'-O position of the ribose in the fully assembled 50S ribosomal subunit. This Methanosarcina acetivorans (strain ATCC 35395 / DSM 2834 / JCM 12185 / C2A) protein is Ribosomal RNA large subunit methyltransferase E.